Reading from the N-terminus, the 66-residue chain is Large ribosomal subunit protein bL33c (66 aa).

This sequence belongs to the bacterial ribosomal protein bL33 family.

Its subcellular location is the plastid. The protein resides in the chloroplast. This Coffea arabica (Arabian coffee) protein is Large ribosomal subunit protein bL33c.